The primary structure comprises 205 residues: Meiotic nuclear division protein 1 homolog (205 aa).

At Ser2 the chain carries N-acetylserine. Residues Lys83 to Ile173 adopt a coiled-coil conformation.

This sequence belongs to the MND1 family. In terms of assembly, heterodimer with PSMC3IP/HOP2. MND1-PSMC3IP interacts with DMC1 and RAD51 and binds to ssDNA and dsDNA showing no preference for either form of DNA.

The protein resides in the nucleus. In terms of biological role, required for proper homologous chromosome pairing and efficient cross-over and intragenic recombination during meiosis. Stimulates both DMC1- and RAD51-mediated homologous strand assimilation, which is required for the resolution of meiotic double-strand breaks. The sequence is that of Meiotic nuclear division protein 1 homolog from Mus musculus (Mouse).